The sequence spans 92 residues: Large ribosomal subunit protein eL43 (92 aa).

The C4-type zinc finger occupies 39-60 (CSFCGKKAVKRGAAGIWNCSSC).

The protein belongs to the eukaryotic ribosomal protein eL43 family.

The protein is Large ribosomal subunit protein eL43 (RPL43) of Eremothecium gossypii (strain ATCC 10895 / CBS 109.51 / FGSC 9923 / NRRL Y-1056) (Yeast).